The chain runs to 933 residues: Bifunctional uridylyltransferase/uridylyl-removing enzyme (933 aa).

The interval 1–379 (MAKISLKLDE…TFQRRKRKLA (379 aa)) is uridylyltransferase. The segment at 380-736 (GTSDFIVDNH…VKTHQFEAVT (357 aa)) is uridylyl-removing. Residues 496–619 (VDEHLIRCIG…VQSVERLKLL (124 aa)) form the HD domain. 2 ACT domains span residues 737–818 (EITV…EMIE) and 848–922 (VIEV…GIAP).

Belongs to the GlnD family. It depends on Mg(2+) as a cofactor.

It carries out the reaction [protein-PII]-L-tyrosine + UTP = [protein-PII]-uridylyl-L-tyrosine + diphosphate. It catalyses the reaction [protein-PII]-uridylyl-L-tyrosine + H2O = [protein-PII]-L-tyrosine + UMP + H(+). With respect to regulation, uridylyltransferase (UTase) activity is inhibited by glutamine, while glutamine activates uridylyl-removing (UR) activity. Modifies, by uridylylation and deuridylylation, the PII regulatory proteins (GlnB and homologs), in response to the nitrogen status of the cell that GlnD senses through the glutamine level. Under low glutamine levels, catalyzes the conversion of the PII proteins and UTP to PII-UMP and PPi, while under higher glutamine levels, GlnD hydrolyzes PII-UMP to PII and UMP (deuridylylation). Thus, controls uridylylation state and activity of the PII proteins, and plays an important role in the regulation of nitrogen fixation and metabolism. This chain is Bifunctional uridylyltransferase/uridylyl-removing enzyme, found in Mesorhizobium japonicum (strain LMG 29417 / CECT 9101 / MAFF 303099) (Mesorhizobium loti (strain MAFF 303099)).